A 118-amino-acid chain; its full sequence is Thioredoxin H5 (118 aa).

An N-acetylalanine modification is found at A2. The 112-residue stretch at 2–113 (AGEGEVIACH…INEKLMKHGG (112 aa)) folds into the Thioredoxin domain. Residues C39 and C42 each act as nucleophile in the active site. C39 and C42 are disulfide-bonded.

It belongs to the thioredoxin family. Plant H-type subfamily. In terms of assembly, interacts with MDH1.

The protein resides in the cytoplasm. Functionally, thiol-disulfide oxidoreductase involved in response to pathogens and oxidative stresses. Required for the response to victorin, a phytotoxin which induces programmed cell death in sensitive plants. Possesses insulin disulfide bonds reducing activity. In Arabidopsis thaliana (Mouse-ear cress), this protein is Thioredoxin H5 (TRX5).